Consider the following 46-residue polypeptide: Protein PsbN (46 aa).

Residues alanine 7 to tyrosine 27 form a helical membrane-spanning segment.

The protein belongs to the PsbN family.

It localises to the cellular thylakoid membrane. In terms of biological role, may play a role in photosystem I and II biogenesis. This chain is Protein PsbN, found in Parasynechococcus marenigrum (strain WH8102).